The following is an 821-amino-acid chain: Leucine--tRNA ligase (821 aa).

The 'HIGH' region motif lies at Pro-44 to His-54. The short motif at Lys-589–Ser-593 is the 'KMSKS' region element. Residue Lys-592 coordinates ATP.

Belongs to the class-I aminoacyl-tRNA synthetase family.

Its subcellular location is the cytoplasm. It catalyses the reaction tRNA(Leu) + L-leucine + ATP = L-leucyl-tRNA(Leu) + AMP + diphosphate. The chain is Leucine--tRNA ligase from Campylobacter concisus (strain 13826).